The following is a 164-amino-acid chain: Aspartate carbamoyltransferase regulatory chain (164 aa).

Zn(2+)-binding residues include Cys116, Cys121, Cys146, and Cys149.

The protein belongs to the PyrI family. As to quaternary structure, contains catalytic and regulatory chains. Zn(2+) serves as cofactor.

Functionally, involved in allosteric regulation of aspartate carbamoyltransferase. The sequence is that of Aspartate carbamoyltransferase regulatory chain from Staphylothermus marinus (strain ATCC 43588 / DSM 3639 / JCM 9404 / F1).